We begin with the raw amino-acid sequence, 138 residues long: Basic phospholipase A2 homolog bothropstoxin-II (138 aa).

Residues Met-1–Gly-16 form the signal peptide. Disulfide bonds link Cys-42-Cys-131, Cys-44-Cys-60, Cys-59-Cys-111, Cys-65-Cys-138, Cys-66-Cys-104, Cys-73-Cys-97, and Cys-91-Cys-102. Positions Lys-121–Lys-133 are important for membrane-damaging activities in eukaryotes and bacteria; heparin-binding.

This sequence belongs to the phospholipase A2 family. Group II subfamily. D49 sub-subfamily. In terms of assembly, homodimer; non-covalently linked (probable alternative/compact dimer conformation). In terms of tissue distribution, expressed by the venom gland.

Its subcellular location is the secreted. Functionally, snake venom phospholipase A2 (PLA2) that shows low enzymatic activity even tough it conserves the catalytic residues. Shows a strong myotoxic activity and induces indirect hemolysis, anticoagulant properties, and cytotoxic activities. In vivo, it induces muscle necrosis, accompanied by polymorphonuclear cell infiltration, and edema in the mouse paw. It exerts its function even in the absence of extracellular calcium, indicating it is not a calcium-dependent enzyme. A model of myotoxic mechanism has been proposed: an apo Lys49-PLA2 is activated by the entrance of a hydrophobic molecule (e.g. fatty acid) at the hydrophobic channel of the protein leading to a reorientation of a monomer. This reorientation causes a transition between 'inactive' to 'active' states, causing alignment of C-terminal and membrane-docking sites (MDoS) side-by-side and putting the membrane-disruption sites (MDiS) in the same plane, exposed to solvent and in a symmetric position for both monomers. The MDoS region stabilizes the toxin on membrane by the interaction of charged residues with phospholipid head groups. Subsequently, the MDiS region destabilizes the membrane with penetration of hydrophobic residues. This insertion causes a disorganization of the membrane, allowing an uncontrolled influx of ions (i.e. calcium and sodium), and eventually triggering irreversible intracellular alterations and cell death. The chain is Basic phospholipase A2 homolog bothropstoxin-II from Bothrops jararacussu (Jararacussu).